Reading from the N-terminus, the 166-residue chain is Lipoprotein signal peptidase (166 aa).

Transmembrane regions (helical) follow at residues 12–32 (WLWL…LILQ), 70–90 (WFFA…MYRS), and 102–122 (ALII…GFVV). Residues D123 and D141 contribute to the active site. Residues 137–157 (FNLADTAICIGAALIVLEGFL) traverse the membrane as a helical segment.

The protein belongs to the peptidase A8 family.

The protein localises to the cell inner membrane. It carries out the reaction Release of signal peptides from bacterial membrane prolipoproteins. Hydrolyzes -Xaa-Yaa-Zaa-|-(S,diacylglyceryl)Cys-, in which Xaa is hydrophobic (preferably Leu), and Yaa (Ala or Ser) and Zaa (Gly or Ala) have small, neutral side chains.. It participates in protein modification; lipoprotein biosynthesis (signal peptide cleavage). Functionally, this protein specifically catalyzes the removal of signal peptides from prolipoproteins. This chain is Lipoprotein signal peptidase, found in Salmonella typhi.